Reading from the N-terminus, the 100-residue chain is NADH-quinone oxidoreductase subunit K (100 aa).

Transmembrane regions (helical) follow at residues 2–22, 28–48, and 63–83; these read ISLNHYLLLCVILFCIGLFGI, ILMLFFSTEILLNAINIGFVA, and LFIIAIAASEIAVGLGLVVIW.

The protein belongs to the complex I subunit 4L family. NDH-1 is composed of 14 different subunits. Subunits NuoA, H, J, K, L, M, N constitute the membrane sector of the complex.

The protein resides in the cell inner membrane. It catalyses the reaction a quinone + NADH + 5 H(+)(in) = a quinol + NAD(+) + 4 H(+)(out). In terms of biological role, NDH-1 shuttles electrons from NADH, via FMN and iron-sulfur (Fe-S) centers, to quinones in the respiratory chain. The immediate electron acceptor for the enzyme in this species is believed to be ubiquinone. Couples the redox reaction to proton translocation (for every two electrons transferred, four hydrogen ions are translocated across the cytoplasmic membrane), and thus conserves the redox energy in a proton gradient. The chain is NADH-quinone oxidoreductase subunit K from Helicobacter hepaticus (strain ATCC 51449 / 3B1).